The sequence spans 589 residues: Probable ATP-dependent RNA helicase DDX59 (589 aa).

2 disordered regions span residues Met1–Gly36 and Lys48–Gln98. A compositionally biased stretch (basic and acidic residues) spans Asn12 to Pro27. Residue Lys26 forms a Glycyl lysine isopeptide (Lys-Gly) (interchain with G-Cter in SUMO2) linkage. Ser64 bears the Phosphoserine mark. Residues Gly80–Val91 are compositionally biased toward basic and acidic residues. The segment at Gly104–Ala133 adopts an HIT-type zinc-finger fold. Phosphoserine occurs at positions 156 and 160. The Q motif motif lies at Ile203 to Met231. Residues Ile234–Ile375 form the Helicase ATP-binding domain. Residue Ala247 to Thr254 participates in ATP binding. A DEAD box motif is present at residues Val323–Asp326. The Helicase C-terminal domain occupies Lys399 to Pro549.

Belongs to the DEAD box helicase family. DDX59 subfamily. In terms of assembly, interacts (via HIT-type zinc finger) with the RUVBL1/RUVBL2 complex in the presence of ADP.

The protein localises to the cytoplasm. Its subcellular location is the nucleus. It catalyses the reaction ATP + H2O = ADP + phosphate + H(+). The protein is Probable ATP-dependent RNA helicase DDX59 (Ddx59) of Rattus norvegicus (Rat).